The chain runs to 217 residues: Homologous-pairing protein 2 homolog (217 aa).

The segment at L89–L117 is interaction with NR3C1, homodimerization and transcriptional activation almost abolished when missing. Residues I93 to H153 adopt a coiled-coil conformation. Residues T118–E182 are DNA-binding. The tract at residues T118 to E182 is interaction with NR3C1 decreased when missing.

This sequence belongs to the HOP2 family. As to quaternary structure, forms a stable heterodimer with MND1. Interacts with PSMC3/TBP1. Interacts with the DNA-binding domain of the nuclear receptors NR3C1/GR, ESR2/ER-beta, THRB and RXRA. Post-translationally, phosphorylated by PKA, PKC and MAPK.

It is found in the nucleus. In terms of biological role, plays an important role in meiotic recombination. Stimulates DMC1-mediated strand exchange required for pairing homologous chromosomes during meiosis. The complex PSMC3IP/MND1 binds DNA, stimulates the recombinase activity of DMC1 as well as DMC1 D-loop formation from double-strand DNA. This complex stabilizes presynaptic RAD51 and DMC1 filaments formed on single strand DNA to capture double-strand DNA. This complex stimulates both synaptic and presynaptic critical steps in RAD51 and DMC1-promoted homologous pairing. May inhibit HIV-1 viral protein TAT activity and modulate the activity of proteasomes through association with PSMC3. Plays a role as a coactivator in nuclear receptor-mediated transcription. The sequence is that of Homologous-pairing protein 2 homolog (Psmc3ip) from Rattus norvegicus (Rat).